Reading from the N-terminus, the 372-residue chain is Lysophosphatidic acid receptor 5 (372 aa).

Residues 1–26 are Extracellular-facing; the sequence is MLANSSSTNSSVLPCPDYRPTHRLHL. Asn-4 and Asn-9 each carry an N-linked (GlcNAc...) asparagine glycan. Residues 27 to 47 traverse the membrane as a helical segment; it reads VVYSLVLAAGLPLNALALWVF. Residues 48 to 55 lie on the Cytoplasmic side of the membrane; it reads LRALRVHS. The helical transmembrane segment at 56–76 threads the bilayer; it reads VVSVYMCNLAASDLLFTLSLP. Over 77–96 the chain is Extracellular; the sequence is VRLSYYALHHWPFPDLLCQT. An intrachain disulfide couples Cys-94 to Cys-175. The helical transmembrane segment at 97 to 117 threads the bilayer; sequence TGAIFQMNMYGSCIFLMLINV. Over 118–136 the chain is Cytoplasmic; the sequence is DRYAAIVHPLRLRHLRRPR. The helical transmembrane segment at 137–157 threads the bilayer; that stretch reads VARLLCLGVWALILVFAVPAA. The Extracellular segment spans residues 158–187; sequence RVHRPSRCRYRDLEVRLCFESFSDELWKGR. Residues 188–208 form a helical membrane-spanning segment; that stretch reads LLPLVLLAEALGFLLPLAAVV. Residues 209 to 239 lie on the Cytoplasmic side of the membrane; sequence YSSGRVFWTLARPDATQSQRRRKTVRLLLAN. A helical transmembrane segment spans residues 240–260; the sequence is LVIFLLCFVPYNSTLAVYGLL. Over 261–276 the chain is Extracellular; the sequence is RSKLVAASVPARDRVR. A helical membrane pass occupies residues 277–297; sequence GVLMVMVLLAGANCVLDPLVY. At 298–372 the chain is on the cytoplasmic side; sequence YFSAEGFRNT…FTQCPQDSAL (75 aa). Residues 312 to 372 form a disordered region; it reads GTPHRARTSA…FTQCPQDSAL (61 aa). Polar residues-rich tracts occupy residues 332–341 and 357–372; these read SERSAVTTDA and SHSL…DSAL.

This sequence belongs to the G-protein coupled receptor 1 family. As to expression, not expressed in frontal cortex, basal forebrain, caudate putamen, thalamus, or hippocampus.

It is found in the cell membrane. In terms of biological role, receptor for lysophosphatidic acid (LPA), a mediator of diverse cellular activities. The chain is Lysophosphatidic acid receptor 5 (LPAR5) from Homo sapiens (Human).